The chain runs to 201 residues: 3-isopropylmalate dehydratase small subunit (201 aa).

Belongs to the LeuD family. LeuD type 1 subfamily. As to quaternary structure, heterodimer of LeuC and LeuD.

The enzyme catalyses (2R,3S)-3-isopropylmalate = (2S)-2-isopropylmalate. The protein operates within amino-acid biosynthesis; L-leucine biosynthesis; L-leucine from 3-methyl-2-oxobutanoate: step 2/4. Functionally, catalyzes the isomerization between 2-isopropylmalate and 3-isopropylmalate, via the formation of 2-isopropylmaleate. The protein is 3-isopropylmalate dehydratase small subunit of Escherichia coli O9:H4 (strain HS).